A 105-amino-acid chain; its full sequence is Flagellar transcriptional regulator FlhD (105 aa).

The protein belongs to the FlhD family. Homodimer; disulfide-linked. Forms a heterohexamer composed of two FlhC and four FlhD subunits. Each FlhC binds a FlhD dimer, forming a heterotrimer, and a hexamer assembles by dimerization of two heterotrimers.

Its subcellular location is the cytoplasm. In terms of biological role, functions in complex with FlhC as a master transcriptional regulator that regulates transcription of several flagellar and non-flagellar operons by binding to their promoter region. Activates expression of class 2 flagellar genes, including fliA, which is a flagellum-specific sigma factor that turns on the class 3 genes. Also regulates genes whose products function in a variety of physiological pathways. In Cupriavidus pinatubonensis (strain JMP 134 / LMG 1197) (Cupriavidus necator (strain JMP 134)), this protein is Flagellar transcriptional regulator FlhD.